The chain runs to 96 residues: MRHYEIMVILDSSLEERTVAPSLDTYLNVIRTAGGSVEKTDVWGRRRLAYEIDKKTEGIYAVIDLQATPAAVAELERQLRLNESVLRTKVIRPEVR.

The protein belongs to the bacterial ribosomal protein bS6 family.

Functionally, binds together with bS18 to 16S ribosomal RNA. This Salinispora arenicola (strain CNS-205) protein is Small ribosomal subunit protein bS6.